Reading from the N-terminus, the 135-residue chain is Large ribosomal subunit protein uL16c (135 aa).

Belongs to the universal ribosomal protein uL16 family. As to quaternary structure, part of the 50S ribosomal subunit.

The protein localises to the plastid. Its subcellular location is the chloroplast. The chain is Large ribosomal subunit protein uL16c from Gossypium barbadense (Sea Island cotton).